The chain runs to 131 residues: Profilin-1 (131 aa).

A disulfide bridge links cysteine 13 with cysteine 115. Positions arginine 81–threonine 97 match the Involved in PIP2 interaction motif. Threonine 111 is modified (phosphothreonine).

Belongs to the profilin family. Occurs in many kinds of cells as a complex with monomeric actin in a 1:1 ratio.

It localises to the cytoplasm. The protein localises to the cytoskeleton. Functionally, binds to actin and affects the structure of the cytoskeleton. At high concentrations, profilin prevents the polymerization of actin, whereas it enhances it at low concentrations. By binding to PIP2, it inhibits the formation of IP3 and DG. The polypeptide is Profilin-1 (PRO1) (Phleum pratense (Common timothy)).